A 134-amino-acid polypeptide reads, in one-letter code: Phospholipase A2 (134 aa).

Tryptophan 8, glycine 10, and glycine 12 together coordinate Ca(2+). 5 disulfide bridges follow: cysteine 9–cysteine 31, cysteine 30–cysteine 70, cysteine 37–cysteine 63, cysteine 61–cysteine 95, and cysteine 105–cysteine 113. Asparagine 13 is a glycosylation site (N-linked (GlcNAc...) asparagine). Histidine 34 is a catalytic residue. A Ca(2+)-binding site is contributed by aspartate 35. Residue aspartate 64 is part of the active site.

Belongs to the phospholipase A2 family. Group III subfamily. It depends on Ca(2+) as a cofactor. As to expression, expressed by the venom gland.

The protein resides in the secreted. It carries out the reaction a 1,2-diacyl-sn-glycero-3-phosphocholine + H2O = a 1-acyl-sn-glycero-3-phosphocholine + a fatty acid + H(+). PLA2 catalyzes the calcium-dependent hydrolysis of the 2-acyl groups in 3-sn-phosphoglycerides. In Apis cerana cerana (Oriental honeybee), this protein is Phospholipase A2.